We begin with the raw amino-acid sequence, 306 residues long: Beta-lactamase (306 aa).

An N-terminal signal peptide occupies residues 1 to 36; sequence MKLKTKASIKFGICVGLLCLSITGFTPFFNSTHAEA. Serine 89 (acyl-ester intermediate) is an active-site residue. Substrate is bound at residue 251–253; that stretch reads KSG.

This sequence belongs to the class-A beta-lactamase family.

It is found in the secreted. The enzyme catalyses a beta-lactam + H2O = a substituted beta-amino acid. Functionally, this protein is a beta-lactamase with a substrate specificity for penicillins. This Bacillus subtilis (strain 168) protein is Beta-lactamase (penP).